The sequence spans 436 residues: 3-ketoacyl-CoA thiolase (436 aa).

The active-site Acyl-thioester intermediate is C99. Catalysis depends on proton acceptor residues H392 and C422.

The protein belongs to the thiolase-like superfamily. Thiolase family. In terms of assembly, heterotetramer of two alpha chains (FadJ) and two beta chains (FadI).

It is found in the cytoplasm. It catalyses the reaction an acyl-CoA + acetyl-CoA = a 3-oxoacyl-CoA + CoA. It participates in lipid metabolism; fatty acid beta-oxidation. Functionally, catalyzes the final step of fatty acid oxidation in which acetyl-CoA is released and the CoA ester of a fatty acid two carbons shorter is formed. The chain is 3-ketoacyl-CoA thiolase from Escherichia coli O157:H7.